We begin with the raw amino-acid sequence, 119 residues long: Mitochondrial coiled-coil domain protein 1 (119 aa).

The N-terminal 24 residues, 1–24, are a transit peptide targeting the mitochondrion; that stretch reads MVLPLPWLSRYHFLRLLLPSWSLA. Residues 25-65 are disordered; sequence PQGSHGCCSQNPKASMEEQTSSRGNGKMTSPPRGPGTHRTA. Over residues 31–52 the composition is skewed to polar residues; that stretch reads CCSQNPKASMEEQTSSRGNGKM. The stretch at 62–116 forms a coiled coil; sequence HRTAELARAEELLEQQLELYQALLEGQEGAWEAQALVLKIQKLKEQMRRHQESLG.

In terms of tissue distribution, widely expressed. Expressed in adult and fetal liver, kidney and lung. Expressed in fetal brain. Weakly expressed in fetal spleen.

Its subcellular location is the mitochondrion. The sequence is that of Mitochondrial coiled-coil domain protein 1 (MCCD1) from Homo sapiens (Human).